The chain runs to 349 residues: uncharacterized protein (349 aa).

The helical transmembrane segment at 221-241 (AFVVWIGSGLNIIWWTGIVLL) threads the bilayer. Pro residues predominate over residues 328–339 (VASAPPAVPSQP). Positions 328–349 (VASAPPAVPSQPPEYSSVFPPV) are disordered.

Its subcellular location is the host membrane. This is an uncharacterized protein from Human cytomegalovirus (strain Merlin) (HHV-5).